The chain runs to 338 residues: Ketol-acid reductoisomerase (NADP(+)) (338 aa).

Residues Met1–Thr181 form the KARI N-terminal Rossmann domain. NADP(+)-binding positions include Tyr24–Gln27, Arg47, Ser50, Ser52, and Asp82–Gln85. His107 is a catalytic residue. Residue Gly133 coordinates NADP(+). The KARI C-terminal knotted domain occupies Thr182–Ile327. Mg(2+) contacts are provided by Asp190, Glu194, Glu226, and Glu230. Ser251 is a binding site for substrate.

This sequence belongs to the ketol-acid reductoisomerase family. Mg(2+) serves as cofactor.

It carries out the reaction (2R)-2,3-dihydroxy-3-methylbutanoate + NADP(+) = (2S)-2-acetolactate + NADPH + H(+). The catalysed reaction is (2R,3R)-2,3-dihydroxy-3-methylpentanoate + NADP(+) = (S)-2-ethyl-2-hydroxy-3-oxobutanoate + NADPH + H(+). It participates in amino-acid biosynthesis; L-isoleucine biosynthesis; L-isoleucine from 2-oxobutanoate: step 2/4. Its pathway is amino-acid biosynthesis; L-valine biosynthesis; L-valine from pyruvate: step 2/4. Its function is as follows. Involved in the biosynthesis of branched-chain amino acids (BCAA). Catalyzes an alkyl-migration followed by a ketol-acid reduction of (S)-2-acetolactate (S2AL) to yield (R)-2,3-dihydroxy-isovalerate. In the isomerase reaction, S2AL is rearranged via a Mg-dependent methyl migration to produce 3-hydroxy-3-methyl-2-ketobutyrate (HMKB). In the reductase reaction, this 2-ketoacid undergoes a metal-dependent reduction by NADPH to yield (R)-2,3-dihydroxy-isovalerate. The sequence is that of Ketol-acid reductoisomerase (NADP(+)) from Psychrobacter sp. (strain PRwf-1).